Here is a 153-residue protein sequence, read N- to C-terminus: Nucleoside diphosphate kinase (153 aa).

Residues Lys12, Phe60, Arg88, Thr94, Arg105, and Asn115 each coordinate ATP. The active-site Pros-phosphohistidine intermediate is His118.

It belongs to the NDK family. Mg(2+) is required as a cofactor.

Its subcellular location is the cytoplasm. It carries out the reaction a 2'-deoxyribonucleoside 5'-diphosphate + ATP = a 2'-deoxyribonucleoside 5'-triphosphate + ADP. It catalyses the reaction a ribonucleoside 5'-diphosphate + ATP = a ribonucleoside 5'-triphosphate + ADP. Major role in the synthesis of nucleoside triphosphates other than ATP. The ATP gamma phosphate is transferred to the NDP beta phosphate via a ping-pong mechanism, using a phosphorylated active-site intermediate. This chain is Nucleoside diphosphate kinase, found in Natronomonas pharaonis (strain ATCC 35678 / DSM 2160 / CIP 103997 / JCM 8858 / NBRC 14720 / NCIMB 2260 / Gabara) (Halobacterium pharaonis).